Reading from the N-terminus, the 776-residue chain is Protein FAM83C (776 aa).

The interval 1–340 (MQGCQAGASI…LYAESQPVEG (340 aa)) is DUF1669. Disordered stretches follow at residues 344-467 (NEDP…STSP), 494-565 (SRLP…SLQH), 617-653 (HGQLDLLPQNPKPQAPKIPSDAYSSAGPSKPSLDDRR), 669-694 (PFRSEGPGPSCPPEPSPVRMAGVGSA), and 716-745 (QGARQKPEPGIPGAPVSGHQNGSSNDLFAP). A compositionally biased stretch (low complexity) spans 368–385 (SATGSSPSSNSLSSIKHS). Residues 452–467 (PWSQSSPALNHSSTSP) are compositionally biased toward polar residues. Residues 523–539 (VEEKKVSLSQSHDHLDR) show a composition bias toward basic and acidic residues. A compositionally biased stretch (polar residues) spans 554–563 (SRVTPDSSSL).

The protein belongs to the FAM83 family. As to quaternary structure, directly interacts (via DUF1669) with CSNK1A1 and CSNK1A1L. May interact with RAF1. Post-translationally, phosphorylated by CSNK1A1.

It localises to the cytoplasm. Functionally, may play a role in MAPK signaling. This chain is Protein FAM83C, found in Mus musculus (Mouse).